The following is a 185-amino-acid chain: Hypoxanthine/guanine phosphoribosyltransferase (185 aa).

The protein belongs to the purine/pyrimidine phosphoribosyltransferase family. Archaeal HPRT subfamily. In terms of assembly, homodimer.

The protein resides in the cytoplasm. It catalyses the reaction IMP + diphosphate = hypoxanthine + 5-phospho-alpha-D-ribose 1-diphosphate. The enzyme catalyses GMP + diphosphate = guanine + 5-phospho-alpha-D-ribose 1-diphosphate. It participates in purine metabolism; IMP biosynthesis via salvage pathway; IMP from hypoxanthine: step 1/1. Its function is as follows. Catalyzes a salvage reaction resulting in the formation of IMP that is energically less costly than de novo synthesis. The polypeptide is Hypoxanthine/guanine phosphoribosyltransferase (Aciduliprofundum boonei (strain DSM 19572 / T469)).